The sequence spans 370 residues: Gap junction delta-4 protein (370 aa).

The Cytoplasmic segment spans residues 1–19 (MEGVDLLGFLIITLNCNVT). Residues 20–40 (MVGKLWFVLTMLLRMLVIVLA) form a helical membrane-spanning segment. Residues 41–76 (GRPVYQDEQERFVCNTLQPGCANVCYDVFSPVSHLR) lie on the Extracellular side of the membrane. The chain crosses the membrane as a helical span at residues 77 to 97 (FWLIQGVCVLLPSAVFSVYVL). Residues 98 to 146 (HRGATLAALGPRRCPDPREPASGQRRCPRPFGERGGLQVPDFSAGYIIH) lie on the Cytoplasmic side of the membrane. The chain crosses the membrane as a helical span at residues 147–167 (LLLRTLLEAAFGALHYFLFGF). The Extracellular portion of the chain corresponds to 168 to 196 (LAPKKFPCTRPPCTGVVDCYVSRPTEKSL). A helical transmembrane segment spans residues 197 to 217 (LMLFLWAVSALSFLLGLADLV). Over 218 to 370 (CSLRRRMRRR…HLRARKSEWV (153 aa)) the chain is Cytoplasmic. The segment at 224–370 (MRRRPGPPTS…HLRARKSEWV (147 aa)) is disordered. A compositionally biased stretch (basic and acidic residues) spans 246 to 260 (AEGRRTDEEGGREEE). The span at 331–346 (PSAAPSRLAAPPSCSS) shows a compositional bias: low complexity.

Belongs to the connexin family. Delta-type subfamily. A connexon is composed of a hexamer of connexins. As to expression, expressed in pancreas, kidney, skeletal muscle, liver, placenta, and heart.

It is found in the cell membrane. The protein resides in the cell junction. It localises to the gap junction. Functionally, one gap junction consists of a cluster of closely packed pairs of transmembrane channels, the connexons, through which materials of low MW diffuse from one cell to a neighboring cell. The polypeptide is Gap junction delta-4 protein (GJD4) (Homo sapiens (Human)).